The chain runs to 244 residues: 7-cyano-7-deazaguanine synthase (244 aa).

Residue 14 to 24 (FSGGQDSATCV) coordinates ATP. Cys202, Cys217, Cys220, and Cys223 together coordinate Zn(2+).

This sequence belongs to the QueC family. Zn(2+) is required as a cofactor.

It carries out the reaction 7-carboxy-7-deazaguanine + NH4(+) + ATP = 7-cyano-7-deazaguanine + ADP + phosphate + H2O + H(+). It participates in purine metabolism; 7-cyano-7-deazaguanine biosynthesis. In terms of biological role, catalyzes the ATP-dependent conversion of 7-carboxy-7-deazaguanine (CDG) to 7-cyano-7-deazaguanine (preQ(0)). The sequence is that of 7-cyano-7-deazaguanine synthase from Burkholderia vietnamiensis (strain G4 / LMG 22486) (Burkholderia cepacia (strain R1808)).